The sequence spans 321 residues: Fibronectin type III domain-containing protein 8 (321 aa).

In terms of domain architecture, Fibronectin type-III spans 175 to 277; sequence VPEVPFICEH…KPYKFATVST (103 aa).

The chain is Fibronectin type III domain-containing protein 8 (Fndc8) from Mus musculus (Mouse).